A 428-amino-acid chain; its full sequence is CinA-like protein (428 aa).

It belongs to the CinA family.

The sequence is that of CinA-like protein from Chlorobium phaeovibrioides (strain DSM 265 / 1930) (Prosthecochloris vibrioformis (strain DSM 265)).